Consider the following 515-residue polypeptide: Calcium-dependent protein kinase 2 (515 aa).

The disordered stretch occupies residues 1–51; the sequence is MGNCCPGSGDAEPASSDASTGNGSSSFKAGASPSSAPAQNKPPAPIGPVLG. A lipid anchor (N-myristoyl glycine) is attached at glycine 2. Residues 14-38 show a composition bias toward low complexity; sequence ASSDASTGNGSSSFKAGASPSSAPA. The Protein kinase domain occupies 61 to 319; sequence YTIGKELGRG…AYEVLNHPWI (259 aa). Residues 67–75 and lysine 90 contribute to the ATP site; that span reads LGRGQFGVT. The Proton acceptor role is filled by aspartate 185. The tract at residues 325–355 is autoinhibitory domain; the sequence is APDTPLDNAVMNRLKQFRAMNQFKKAALRVI. 4 EF-hand domains span residues 362–397, 398–433, 434–469, and 473–504; these read EEIR…QGTK, LTEA…MNRM, DREE…KGLL, and DIKD…GNPE. Residues aspartate 375, aspartate 377, serine 379, threonine 381, glutamate 386, aspartate 411, aspartate 413, asparagine 415, threonine 417, glutamate 422, aspartate 447, aspartate 449, serine 451, cysteine 453, glutamate 458, aspartate 482, aspartate 484, aspartate 486, arginine 488, and glutamate 493 each coordinate Ca(2+).

The protein belongs to the protein kinase superfamily. Ser/Thr protein kinase family. CDPK subfamily. Expressed in heading panicles, spikelets and mature pollen grains.

It localises to the membrane. It catalyses the reaction L-seryl-[protein] + ATP = O-phospho-L-seryl-[protein] + ADP + H(+). The catalysed reaction is L-threonyl-[protein] + ATP = O-phospho-L-threonyl-[protein] + ADP + H(+). With respect to regulation, activated by calcium. Autophosphorylation may play an important role in the regulation of the kinase activity. Its function is as follows. May play a role in signal transduction pathways that involve calcium as a second messenger. The polypeptide is Calcium-dependent protein kinase 2 (Oryza sativa subsp. japonica (Rice)).